The primary structure comprises 667 residues: Single-minded homolog 2 (667 aa).

The bHLH domain occupies 1 to 53 (MKEKSKNAAKTRREKENGEFYELAKLLPLPSAITSQLDKASIIRLTTSYLKMR). 2 consecutive PAS domains span residues 77–149 (AKEL…LHHH) and 218–288 (PPSA…LVKG). A PAC domain is found at 292–335 (TKYYRLLSKRGGWVWVQSYATVVHNSRSSRPHCIVSVNYVLTEI). The 332-residue stretch at 336 to 667 (EYKELQLSLE…GASVIITNGR (332 aa)) folds into the Single-minded C-terminal domain. 3 disordered regions span residues 356–389 (WRTALSTSQETRKLVKPKNTKMKTKLRTNPYPPQ), 409–428 (ASPPASAAAPPELQPHSESS), and 500–520 (SSSSPAKNPPEPPANTARHSL). The Nuclear localization signal motif lies at 367–386 (RKLVKPKNTKMKTKLRTNPY). Residues 369–381 (LVKPKNTKMKTKL) are compositionally biased toward basic residues. Residues 409–419 (ASPPASAAAPP) are compositionally biased toward low complexity.

As to quaternary structure, efficient DNA binding requires dimerization with another bHLH protein. Heterodimer of SIM2 and ARNT.

It localises to the nucleus. Functionally, transcription factor that may be a master gene of CNS development in cooperation with Arnt. It may have pleiotropic effects in the tissues expressed during development. This Homo sapiens (Human) protein is Single-minded homolog 2 (SIM2).